We begin with the raw amino-acid sequence, 302 residues long: Urease accessory protein UreD 2 (302 aa).

This sequence belongs to the UreD family. UreD, UreF and UreG form a complex that acts as a GTP-hydrolysis-dependent molecular chaperone, activating the urease apoprotein by helping to assemble the nickel containing metallocenter of UreC. The UreE protein probably delivers the nickel.

Its subcellular location is the cytoplasm. In terms of biological role, required for maturation of urease via the functional incorporation of the urease nickel metallocenter. This is Urease accessory protein UreD 2 from Brucella canis (strain ATCC 23365 / NCTC 10854 / RM-666).